A 70-amino-acid chain; its full sequence is Conotoxin AbVIB (70 aa).

An N-terminal signal peptide occupies residues 1–17 (VIIIAVLFLTACQLTTA). The propeptide occupies 18-41 (ETSSRGKQKHRALRSTDKNSKLTR). The interval 20–41 (SSRGKQKHRALRSTDKNSKLTR) is disordered. Disulfide bonds link Cys-43/Cys-57, Cys-50/Cys-61, and Cys-56/Cys-68.

Belongs to the conotoxin O1 superfamily. Expressed by the venom duct.

It localises to the secreted. This Conus abbreviatus (Abbreviated cone) protein is Conotoxin AbVIB.